The primary structure comprises 355 residues: Peptide chain release factor 1 (355 aa).

Q233 carries the N5-methylglutamine modification.

This sequence belongs to the prokaryotic/mitochondrial release factor family. Post-translationally, methylated by PrmC. Methylation increases the termination efficiency of RF1.

It localises to the cytoplasm. Functionally, peptide chain release factor 1 directs the termination of translation in response to the peptide chain termination codons UAG and UAA. The protein is Peptide chain release factor 1 of Rickettsia typhi (strain ATCC VR-144 / Wilmington).